The sequence spans 155 residues: Small ribosomal subunit protein uS7cz/uS7cy (155 aa).

This sequence belongs to the universal ribosomal protein uS7 family. As to quaternary structure, part of the 30S ribosomal subunit.

Its subcellular location is the plastid. It localises to the chloroplast. One of the primary rRNA binding proteins, it binds directly to 16S rRNA where it nucleates assembly of the head domain of the 30S subunit. The polypeptide is Small ribosomal subunit protein uS7cz/uS7cy (rps7-A) (Anthoceros angustus (Hornwort)).